A 764-amino-acid chain; its full sequence is Polyadenylate-binding protein, cytoplasmic and nuclear (764 aa).

The segment at 36-56 is disordered; sequence VPEAQAEGAEAAPTPTAAPHP. RRM domains lie at 60 to 138, 148 to 225, 241 to 318, and 344 to 462; these read ASLY…WSQR, GNIF…HHIP, TNVY…RAQK, and VNLY…LAQR. 2 disordered regions span residues 375–420 and 587–634; these read VMRD…GDRK and GRGG…PRGN. 2 stretches are compositionally biased toward basic and acidic residues: residues 387-399 and 408-420; these read KDEK…KEGE and GSEK…GDRK. The span at 587–596 shows a compositional bias: gly residues; the sequence is GRGGPAGRGP. Low complexity predominate over residues 597–613; sequence QGIPAGIPQGLQGGPAV. Positions 657 to 734 constitute a PABC domain; it reads GSFLQAQLAT…ALAVYDEYLK (78 aa). The segment covering 735–745 has biased composition (polar residues); it reads TQGQQPTQQPA. Residues 735–764 are disordered; sequence TQGQQPTQQPAEANGEQPKAEEQKPEEQKA. Over residues 752–764 the composition is skewed to basic and acidic residues; the sequence is PKAEEQKPEEQKA.

Belongs to the polyadenylate-binding protein type-1 family.

Its subcellular location is the cytoplasm. It is found in the nucleus. In terms of biological role, binds the poly(A) tail of mRNA. Appears to be an important mediator of the multiple roles of the poly(A) tail in mRNA biogenesis, stability and translation. In the nucleus, involved in both mRNA cleavage and polyadenylation. Is also required for efficient mRNA export to the cytoplasm. Acts in concert with a poly(A)-specific nuclease (PAN) to affect poly(A) tail shortening, which may occur concomitantly with either nucleocytoplasmic mRNA transport or translational initiation. In the cytoplasm, stimulates translation initiation and regulates mRNA decay through translation termination-coupled poly(A) shortening, probably mediated by PAN. The protein is Polyadenylate-binding protein, cytoplasmic and nuclear (pabp-1) of Neurospora crassa (strain ATCC 24698 / 74-OR23-1A / CBS 708.71 / DSM 1257 / FGSC 987).